The chain runs to 264 residues: O-methyltransferase resE (264 aa).

Glutamine 97 and histidine 142 together coordinate S-adenosyl-L-methionine.

It belongs to the methyltransferase superfamily.

It carries out the reaction desmethylrestrictinol + S-adenosyl-L-methionine = restrictinol + S-adenosyl-L-homocysteine + H(+). It functions in the pathway antifungal biosynthesis. O-methyltransferase; part of the gene cluster that mediates the biosynthesis of the tetrahydropyranyl antifungal agent restricticin that acts as an inhibitor of CYP51 and blocks the ergosterol biosynthesis. Within the pathway, resE uses S-adenosylmethionine to methylate position C4 of desmethylrestrictinol to produce restrictinol. The highly reducing polyketide synthase resH, the short chain dehydrogenase resG, the cyclase resF, the FAD-dependent monooxygenase resA and the enoylreductase resD are required to generate the first stable intermediate desmethylrestrictinol. ResH with resD biosynthesize the first polyketide chain intermediate that is reduced by resG, followed by epoxidation by resA before 6-endo cyclization via epoxide opening by resF leads to desmethylrestrictinol. The methyltransferase resE then catalyzes the C4 O-methylation of desmethylrestrictinol to produce restrictinol, and the nonribosomal peptide synthetase resC catalyzes the C3 esterification of restrictinol with glycine that leads to restricticin. The sequence is that of O-methyltransferase resE from Aspergillus sclerotiorum.